Consider the following 355-residue polypeptide: Protein RecA (355 aa).

73-80 (GPESSGKT) contacts ATP.

The protein belongs to the RecA family.

The protein resides in the cytoplasm. Functionally, can catalyze the hydrolysis of ATP in the presence of single-stranded DNA, the ATP-dependent uptake of single-stranded DNA by duplex DNA, and the ATP-dependent hybridization of homologous single-stranded DNAs. It interacts with LexA causing its activation and leading to its autocatalytic cleavage. The sequence is that of Protein RecA from Solidesulfovibrio magneticus (strain ATCC 700980 / DSM 13731 / RS-1) (Desulfovibrio magneticus).